A 1035-amino-acid polypeptide reads, in one-letter code: Electrogenic sodium bicarbonate cotransporter 1 (1035 aa).

Residues 1-421 (MSSEKECLEN…FASDFYDALS (421 aa)) are Cytoplasmic-facing. Over residues 192–217 (SRLFSTPDNGSPTMTHRNLTSTSLND) the composition is skewed to polar residues. 2 disordered regions span residues 192 to 222 (SRLF…SDKP) and 348 to 389 (IEPP…GDSE). Basic and acidic residues predominate over residues 376–389 (APHDDGGGGHGDSE). Residues 422-446 (IQSLSAILFIYLGTVTNAITFGGLL) form a helical membrane-spanning segment. The Extracellular segment spans residues 447 to 456 (GDATENMQGV). Residues 457 to 475 (LESFLGTAVSGAVFCLFGG) traverse the membrane as a helical segment. Residue Q476 is a topological domain, cytoplasmic. The chain crosses the membrane as a discontinuously helical span at residues 477 to 497 (PLTILSSTGPVLVFERLLFNF). Over 498 to 505 (SKDNDFDY) the chain is Extracellular. Residues 506–526 (LEFRLWIGLWSAFQCLILVAT) traverse the membrane as a helical segment. The Cytoplasmic portion of the chain corresponds to 527–540 (DASFLVKYFTRFTE). A helical transmembrane segment spans residues 541-564 (EGFSSLISFIFIYDAFKKMIKLAD). Over 565–648 (YYPINSHFKV…GSNCKYVPDI (84 aa)) the chain is Extracellular. N-linked (GlcNAc...) asparagine glycans are attached at residues N591, N596, N609, and N617. The chain crosses the membrane as a helical span at residues 649-666 (TLMSFILFLGTYTCSMAL). The Cytoplasmic portion of the chain corresponds to 667 to 681 (KKFKTSRYFPTTARK). The helical transmembrane segment at 682-701 (LISDFAIILSILIFCGLDAL) threads the bilayer. Over 702–735 (LGVDTPKLIVPSEFKPTSPNRGWFVPPFGGNPWW) the chain is Extracellular. The chain crosses the membrane as a helical span at residues 736–763 (VYLAAAIPALLVTILIFMDQQITGVIVN). Residues 764-775 (RKEHKLKKGAGY) lie on the Cytoplasmic side of the membrane. A helical membrane pass occupies residues 776 to 792 (HLDLFWVAILMVVCSFM). Residue A793 is a topological domain, extracellular. The discontinuously helical transmembrane segment at 794 to 811 (LPWYVAATVISIAHIDSL) threads the bilayer. Over 812–833 (KMETETSAPGEQPKFLGVREQR) the chain is Cytoplasmic. A helical membrane pass occupies residues 834 to 850 (VTGTVVFLLTGLSVFMA). Topologically, residues 851–857 (PILKFIP) are extracellular. The chain crosses the membrane as a helical span at residues 858–874 (MPVLYGVFLYMGVASLN). The Cytoplasmic portion of the chain corresponds to 875–916 (GVQFMDRLKLLLMPPKYQPDFIYLRHVPLRRVHLFTFLQVVC). The discontinuously helical intramembrane region spans 917 to 942 (LAMLWILKSTVAAIIFPVMILALVAV). At 943–1035 (RKAMDYFFSQ…PTFLERHTSC (93 aa)) the chain is on the cytoplasmic side. A disordered region spans residues 968-1035 (KKKEDEKKKK…PTFLERHTSC (68 aa)). Residues 1007-1035 (IMEKEPFLIDSKPSDRENSPTFLERHTSC) are compositionally biased toward basic and acidic residues.

It belongs to the anion exchanger (TC 2.A.31) family. As to quaternary structure, homodimer. Expressed in kidney and to a lower extent in bladder, brain, intestine, large intestine and eye.

It is found in the basolateral cell membrane. Its subcellular location is the cell membrane. The enzyme catalyses 2 hydrogencarbonate(out) + Na(+)(out) = 2 hydrogencarbonate(in) + Na(+)(in). The catalysed reaction is 3 hydrogencarbonate(out) + Na(+)(out) = 3 hydrogencarbonate(in) + Na(+)(in). Functionally, electrogenic sodium/bicarbonate cotransporter with a Na(+):HCO3(-) stoichiometry varying from 1:2 to 1:3. May regulate bicarbonate influx/efflux at the basolateral membrane of cells and regulate intracellular pH. The sequence is that of Electrogenic sodium bicarbonate cotransporter 1 (SLC4A4) from Ambystoma tigrinum (Eastern tiger salamander).